The sequence spans 312 residues: Pantothenate kinase (312 aa).

Glycine 97–serine 104 lines the ATP pocket.

It belongs to the prokaryotic pantothenate kinase family.

The protein resides in the cytoplasm. It catalyses the reaction (R)-pantothenate + ATP = (R)-4'-phosphopantothenate + ADP + H(+). It participates in cofactor biosynthesis; coenzyme A biosynthesis; CoA from (R)-pantothenate: step 1/5. This is Pantothenate kinase from Mycobacterium marinum (strain ATCC BAA-535 / M).